The chain runs to 435 residues: D-amino acid dehydrogenase (435 aa).

3–17 provides a ligand contact to FAD; sequence VIVLGGGVLGVSTAW.

This sequence belongs to the DadA oxidoreductase family. The cofactor is FAD.

The catalysed reaction is a D-alpha-amino acid + A + H2O = a 2-oxocarboxylate + AH2 + NH4(+). It functions in the pathway amino-acid degradation; D-alanine degradation; NH(3) and pyruvate from D-alanine: step 1/1. Its function is as follows. Oxidative deamination of D-amino acids. The chain is D-amino acid dehydrogenase from Chromobacterium violaceum (strain ATCC 12472 / DSM 30191 / JCM 1249 / CCUG 213 / NBRC 12614 / NCIMB 9131 / NCTC 9757 / MK).